The primary structure comprises 641 residues: MGKIIGIDLGTTNSCVSIMDGGKARVIENSEGDRTTPSIVAYTKDGEVLVGASAKRQAVTNPKNTFYAVKRLIGRKFTDAEVQKDISHVPYGILAHDNGDAWVQTSDAKRMAPQEISARVLEKMKKTAEDYLGEKVTEAVITVPAYFNDSQRQATKDAGRIAGLDVKRIINEPTAAALAYGLDKKGGDRKIAVYDLGGGTFDVSIIEIAEVDGEKQFEVLATNGDTFLGGEDFDNRVIEYLVDEFNKDQGIDLRKDPLALQRLKDAAERAKIELSSSQQTEVNLPYVTADASGPKHLNIKLTRAKLEALVEDLVKKSIEPCRTALNDAGLRASDINEVILVGGQTRMPKVQQAVADFFGKEPRKDVNPDEAVAVGAAIQGGVLAGDVKDVLLLDVTPLSLGIETMGGVFTKIIEKNTTIPTKASQTFSTAEDNQSAVTVHVLQGEREQARFNKSLAKFDLSGIEPAPRGMPQVEVSFDIDANGILHVSAKDKKTNKEQKVEIKAGSGLSDEEIQRMVADAEANREEDKKFHELVQARNQADGLIHATRTAITEHGSKVGGDVIGKVEAALSDLETAMKGDDKAQIEARTKTLEEAGQSLYAAAAAAEQGGSADAASGNAQASKAADDVVDAEFTEVKDDKK.

Threonine 200 carries the post-translational modification Phosphothreonine; by autocatalysis. Over residues 605-623 (AAEQGGSADAASGNAQASK) the composition is skewed to low complexity. The tract at residues 605-627 (AAEQGGSADAASGNAQASKAADD) is disordered.

Belongs to the heat shock protein 70 family.

Functionally, acts as a chaperone. The chain is Chaperone protein DnaK from Xanthomonas oryzae pv. oryzae (strain MAFF 311018).